The following is a 33-amino-acid chain: Brevinin-2PTb (33 aa).

Cysteines 27 and 33 form a disulfide.

Expressed by the skin glands.

It localises to the secreted. Its function is as follows. Has antibacterial activity against the Gram-positive bacterium S.aureus ATCC 25923 (MIC=9 uM) and the Gram-negative bacterium E.coli ATCC 25726 (MIC=9 uM). The protein is Brevinin-2PTb of Pulchrana picturata (Malaysian fire frog).